The sequence spans 473 residues: Photosystem II CP43 reaction center protein (473 aa).

Residues 1-14 (MKTLYSLRRFSHVE) constitute a propeptide that is removed on maturation. Residue threonine 15 is modified to N-acetylthreonine. At threonine 15 the chain carries Phosphothreonine. The next 5 membrane-spanning stretches (helical) occupy residues 69–93 (LFEV…PHLA), 134–155 (LLGP…KDRN), 178–200 (KALY…RKIT), 255–275 (KPFA…LSYS), and 291–312 (WFNN…ASQA). Residue glutamate 367 participates in [CaMn4O5] cluster binding. The chain crosses the membrane as a helical span at residues 447 to 471 (RARAAAAGFEKGIDRDFEPVLSMTP).

It belongs to the PsbB/PsbC family. PsbC subfamily. PSII is composed of 1 copy each of membrane proteins PsbA, PsbB, PsbC, PsbD, PsbE, PsbF, PsbH, PsbI, PsbJ, PsbK, PsbL, PsbM, PsbT, PsbX, PsbY, PsbZ, Psb30/Ycf12, at least 3 peripheral proteins of the oxygen-evolving complex and a large number of cofactors. It forms dimeric complexes. It depends on Binds multiple chlorophylls and provides some of the ligands for the Ca-4Mn-5O cluster of the oxygen-evolving complex. It may also provide a ligand for a Cl- that is required for oxygen evolution. PSII binds additional chlorophylls, carotenoids and specific lipids. as a cofactor.

The protein localises to the plastid membrane. One of the components of the core complex of photosystem II (PSII). It binds chlorophyll and helps catalyze the primary light-induced photochemical processes of PSII. PSII is a light-driven water:plastoquinone oxidoreductase, using light energy to abstract electrons from H(2)O, generating O(2) and a proton gradient subsequently used for ATP formation. This chain is Photosystem II CP43 reaction center protein, found in Cuscuta obtusiflora (Peruvian dodder).